The chain runs to 637 residues: Sterol 3-beta-glucosyltransferase UGT80A2 (637 aa).

Disordered stretches follow at residues Met1–Val29 and Val66–Gln112. Positions Ser13 to Ser24 are enriched in low complexity. Residues Ala67–Arg79 show a composition bias toward polar residues. Residues Arg103 to Gln112 show a composition bias toward basic and acidic residues.

The protein belongs to the glycosyltransferase 28 family. As to expression, expressed in roots, cauline leaf epidermal cells, stomata, stamen, pollen and around the base of siliques.

It catalyses the reaction a sterol + UDP-alpha-D-glucose = a sterol 3-beta-D-glucoside + UDP + H(+). Functionally, involved in the biosynthesis of sterol glucosides. Catalyzes the synthesis of steryl glycosides (SGs) and acyl steryl glycosides (ASGs) which are the most abundant sterol derivatives in higher plants. Can act on several sterols like sitosterol, campesterol and stigmasterol. Both UGT80A2 and UGT80B1 are required for the normal production of SGs and ASGs in seeds. The sequence is that of Sterol 3-beta-glucosyltransferase UGT80A2 (UGT80A2) from Arabidopsis thaliana (Mouse-ear cress).